Consider the following 300-residue polypeptide: 33 kDa chaperonin (300 aa).

Cystine bridges form between Cys-247-Cys-249 and Cys-280-Cys-283.

This sequence belongs to the HSP33 family. Post-translationally, under oxidizing conditions two disulfide bonds are formed involving the reactive cysteines. Under reducing conditions zinc is bound to the reactive cysteines and the protein is inactive.

It localises to the cytoplasm. Its function is as follows. Redox regulated molecular chaperone. Protects both thermally unfolding and oxidatively damaged proteins from irreversible aggregation. Plays an important role in the bacterial defense system toward oxidative stress. This chain is 33 kDa chaperonin, found in Prochlorococcus marinus (strain MIT 9515).